The primary structure comprises 251 residues: UPF0246 protein DSY0297 (251 aa).

Belongs to the UPF0246 family.

The polypeptide is UPF0246 protein DSY0297 (Desulfitobacterium hafniense (strain Y51)).